Reading from the N-terminus, the 69-residue chain is Cell division protein CrgA (69 aa).

Transmembrane regions (helical) follow at residues 14–34 (VWFP…MVLF) and 45–65 (AVGT…FAMM).

The protein belongs to the CrgA family.

Its subcellular location is the cell membrane. Involved in cell division. The sequence is that of Cell division protein CrgA from Tropheryma whipplei (strain TW08/27) (Whipple's bacillus).